A 218-amino-acid chain; its full sequence is Adenylate kinase (218 aa).

An ATP-binding site is contributed by 10 to 15 (GAGKGT). The segment at 30 to 59 (STGDMLRAAVKEGSELGLKVKEIMNSGGLV) is NMP. AMP is bound by residues Thr31, Arg36, 57–59 (GLV), 85–88 (GFPR), and Gln92. Residues 122–159 (GRRVHPGSGRVYHVDYNPPKEEGKDDVTGEALIQRDDD) form an LID region. Residues Arg123 and 132-133 (VY) each bind ATP. Arg156 and Arg167 together coordinate AMP. Gly203 contributes to the ATP binding site.

This sequence belongs to the adenylate kinase family. In terms of assembly, monomer.

The protein resides in the cytoplasm. It catalyses the reaction AMP + ATP = 2 ADP. It participates in purine metabolism; AMP biosynthesis via salvage pathway; AMP from ADP: step 1/1. Catalyzes the reversible transfer of the terminal phosphate group between ATP and AMP. Plays an important role in cellular energy homeostasis and in adenine nucleotide metabolism. The protein is Adenylate kinase of Chromohalobacter salexigens (strain ATCC BAA-138 / DSM 3043 / CIP 106854 / NCIMB 13768 / 1H11).